Reading from the N-terminus, the 311-residue chain is CARD domain-containing protein E10 (311 aa).

The region spanning 21–110 (IWDVERLCLE…EHLVDLLERA (90 aa)) is the CARD domain. Disordered regions lie at residues 125 to 181 (ESGA…GGVY), 203 to 230 (GAGRGGSLLSGGHGGHPPHGGPGGGGRD), and 243 to 311 (IPEP…FFCC). Over residues 140 to 152 (EDNSGYTALLPTN) the composition is skewed to polar residues. The span at 252–272 (SGGGGRGGGVRYDAGGDGRLG) shows a compositional bias: gly residues.

It is found in the host cell membrane. Its function is as follows. Activates host NF-kappa-B and JNK pathways. Induces hyperphosphorylation and redistribution of host bcl-10 from the cytoplasm to the plasma membrane. The inhibitory effect of cellular bcl-10 on NF-kappa-B pathway is then overcome allowing NF-kappa-B activation. This chain is CARD domain-containing protein E10 (E10), found in Equus caballus (Horse).